The chain runs to 280 residues: MVVKVGIAKLGNIASGVMAELLLDERADREDMQTFMATSGTKLQPEDIDRVVTNMKAWGPDFCIVVSPNGVLPGPKGAREALAAAGIPCVVITDDITTKKEEWEALKASEFGYVIMKGDSMIGARREFLDPIEMADYNGNLIKVLSITGAFRKLQVALDEVIDQVKAGKKGKDLALPKLVMTSDKAVEGEFSNPYAYAKARAAYEIAQAVAGVNVKGCFMTKGFENYTPIVASAHEMMRQAMLLCEEAREMEKATDAVIRKPHKNDGTRVAKKTLISKPE.

Belongs to the MTD family.

The enzyme catalyses 5,10-methylenetetrahydromethanopterin + oxidized coenzyme F420-(gamma-L-Glu)(n) + 2 H(+) = 5,10-methenyl-5,6,7,8-tetrahydromethanopterin + reduced coenzyme F420-(gamma-L-Glu)(n). The protein operates within one-carbon metabolism; methanogenesis from CO(2); 5,10-methylene-5,6,7,8-tetrahydromethanopterin from 5,10-methenyl-5,6,7,8-tetrahydromethanopterin (coenzyme F420 route): step 1/1. Its function is as follows. Catalyzes the reversible reduction of methenyl-H(4)MPT(+) to methylene-H(4)MPT. The sequence is that of F420-dependent methylenetetrahydromethanopterin dehydrogenase from Methanospirillum hungatei JF-1 (strain ATCC 27890 / DSM 864 / NBRC 100397 / JF-1).